Reading from the N-terminus, the 423-residue chain is UPF0229 protein PSPA7_0730 (423 aa).

The segment at 84–107 is disordered; sequence AGEHIARPSGGGGGRGGGKASNSG. A compositionally biased stretch (gly residues) spans 92–102; the sequence is SGGGGGRGGGK.

This sequence belongs to the UPF0229 family.

In Pseudomonas paraeruginosa (strain DSM 24068 / PA7) (Pseudomonas aeruginosa (strain PA7)), this protein is UPF0229 protein PSPA7_0730.